We begin with the raw amino-acid sequence, 334 residues long: MDIKLISKKKNIEERKQLLSELHASKSVIVEKDEELVCPMCDSKNIIKDYEKAEIVCEDCGCVLQDNLFDVGPEWRAFDHEQRVKRSRVGAPMTYTIHDKGLSTVIDWRNKDSYGKDISADKRAQLYRLRKWQRRIRVSDASERNLAFALSELDRIASKLGLPRNVRENAAVLYRGAVEKGLIRGRSIEGVAAAALYAACRRCKVPRTLDEIAEMSRVDRKEIGRTYRFISRELKIRLAPTSPIDYVPRFASELKLPGEVESKAISILQKAGDKGLTSGRGPTGVAAAAIYIASVLHGTRKTQREVADVAGVTEVTIRNRYKELTEHLDIDVTL.

The TFIIB-type zinc-finger motif lies at 34 to 65 (EELVCPMCDSKNIIKDYEKAEIVCEDCGCVLQ). Zn(2+) is bound by residues cysteine 38, cysteine 41, cysteine 57, and cysteine 60. 2 tandem repeats follow at residues 151–234 (SELD…SREL) and 245–326 (DYVP…ELTE).

The protein belongs to the TFIIB family.

Stabilizes TBP binding to an archaeal box-A promoter. Also responsible for recruiting RNA polymerase II to the pre-initiation complex (DNA-TBP-TFIIB). The protein is Transcription initiation factor IIB of Methanococcus aeolicus (strain ATCC BAA-1280 / DSM 17508 / OCM 812 / Nankai-3).